The primary structure comprises 80 residues: Cell division protein ZapB (80 aa).

A coiled-coil region spans residues 3 to 80 (LEILEQLEAK…GLLGKMEEVE (78 aa)). A disordered region spans residues 41 to 62 (LEQANNGRSEVEQEAQKARDEQ). The span at 49-62 (SEVEQEAQKARDEQ) shows a compositional bias: basic and acidic residues.

The protein belongs to the ZapB family. Homodimer. The ends of the coiled-coil dimer bind to each other, forming polymers. Interacts with FtsZ.

The protein resides in the cytoplasm. Non-essential, abundant cell division factor that is required for proper Z-ring formation. It is recruited early to the divisome by direct interaction with FtsZ, stimulating Z-ring assembly and thereby promoting cell division earlier in the cell cycle. Its recruitment to the Z-ring requires functional FtsA or ZipA. The polypeptide is Cell division protein ZapB (Aliivibrio salmonicida (strain LFI1238) (Vibrio salmonicida (strain LFI1238))).